The sequence spans 544 residues: O-phosphoserine--tRNA(Cys) ligase (544 aa).

Substrate-binding positions include 194–196 (HMT), 239–241 (SAS), 281–282 (YY), and Asn-335.

It belongs to the class-II aminoacyl-tRNA synthetase family. O-phosphoseryl-tRNA(Cys) synthetase subfamily. Homotetramer. Interacts with SepCysS.

The enzyme catalyses tRNA(Cys) + O-phospho-L-serine + ATP = O-phospho-L-seryl-tRNA(Cys) + AMP + diphosphate. Functionally, catalyzes the attachment of O-phosphoserine (Sep) to tRNA(Cys). The polypeptide is O-phosphoserine--tRNA(Cys) ligase (Methanopyrus kandleri (strain AV19 / DSM 6324 / JCM 9639 / NBRC 100938)).